Reading from the N-terminus, the 318-residue chain is Beta-ketoacyl-[acyl-carrier-protein] synthase III (318 aa).

Residues Cys-112 and His-245 contribute to the active site. The tract at residues 246-250 is ACP-binding; it reads QANLR. Residue Asn-275 is part of the active site.

This sequence belongs to the thiolase-like superfamily. FabH family. Homodimer.

It is found in the cytoplasm. It catalyses the reaction malonyl-[ACP] + acetyl-CoA + H(+) = 3-oxobutanoyl-[ACP] + CO2 + CoA. It participates in lipid metabolism; fatty acid biosynthesis. In terms of biological role, catalyzes the condensation reaction of fatty acid synthesis by the addition to an acyl acceptor of two carbons from malonyl-ACP. Catalyzes the first condensation reaction which initiates fatty acid synthesis and may therefore play a role in governing the total rate of fatty acid production. Possesses both acetoacetyl-ACP synthase and acetyl transacylase activities. Its substrate specificity determines the biosynthesis of branched-chain and/or straight-chain of fatty acids. This is Beta-ketoacyl-[acyl-carrier-protein] synthase III from Blochmanniella floridana.